Here is an 804-residue protein sequence, read N- to C-terminus: Leucine--tRNA ligase (804 aa).

The 'HIGH' region motif lies at 40–51 (PYPSGAGLHVGH). The 'KMSKS' region motif lies at 576–580 (KMSKS). Lys-579 provides a ligand contact to ATP.

Belongs to the class-I aminoacyl-tRNA synthetase family.

The protein localises to the cytoplasm. It carries out the reaction tRNA(Leu) + L-leucine + ATP = L-leucyl-tRNA(Leu) + AMP + diphosphate. This is Leucine--tRNA ligase from Bacillus velezensis (strain DSM 23117 / BGSC 10A6 / LMG 26770 / FZB42) (Bacillus amyloliquefaciens subsp. plantarum).